The primary structure comprises 529 residues: Zinc finger protein 572 (529 aa).

The segment at 1–62 is disordered; the sequence is MEQEKKLLVS…EWSKRHRPQH (62 aa). Residues Lys5 and Lys6 each participate in a glycyl lysine isopeptide (Lys-Gly) (interchain with G-Cter in SUMO2) cross-link. Positions 26–35 are enriched in polar residues; it reads TGDTSMNNLE. Basic and acidic residues predominate over residues 36-55; sequence TVHHNNSKADKLKEKPSEWS. 12 consecutive C2H2-type zinc fingers follow at residues 132–154, 160–182, 188–210, 216–238, 244–266, 272–294, 300–322, 328–350, 384–406, 412–434, 440–462, and 468–490; these read YKCSECWKSFSNSSHLRTHQRTH, YKCSECAKCFCNSSHLIQHLRMH, YQCGECGKSFSNTSHLIIHERTH, YKCPECGKRFSSSSHLIQHHRSH, YECSVCGKGFSHSYVLIEHQRTH, YKCPDCGKSFSQSSSLIRHQRTH, YKCLECEKSFGCNSTLIKHQRIH, YQCPECGKNFSRSSNLITHQKMH, YRCCECGKSFGLSSHLIRHQRTH, YRCSECWKTFSQSSTLVIHQRTH, YKCPDCGESFSQSFNLIRHRRTH, and YKCTSCEKCFSRSAYLSQHRKIH.

This sequence belongs to the krueppel C2H2-type zinc-finger protein family.

The protein resides in the nucleus. In terms of biological role, may be involved in transcriptional regulation. The sequence is that of Zinc finger protein 572 (ZNF572) from Homo sapiens (Human).